Here is a 319-residue protein sequence, read N- to C-terminus: MFKQSLIWYNRYVQKRKKGLDLTIKDRSWSNVLLGLIFKTVVLCFFGLMVIFPFYLMLVVALTSDEVVLNIREPILKSDGWHFENFRRVLEDGKYLNAIWINSLVTILSIILRLFFTVSMGYAFSLKKWKLKKLFWFIFLAVLILPESALLIGQYRVVVVANWNQPEKPAIILGLTMPFVASVFSGFMFRTAFEAIPPRIKESAFVDGCTGLRYFLKIAFPMVRSTTWTVSILTAFAAWNSYLWPLLLLTNRPDLNINLWVLAQGTDGNAGQSDEQIRVLLNLKMAAAILAILPMFIVYFLFRKRIMKAVGSRANTIKG.

Helical transmembrane passes span 41–61, 98–118, 134–154, 169–189, 229–249, and 282–302; these read VVLC…LVVA, AIWI…FFTV, LFWF…LIGQ, PAII…GFMF, TVSI…LLLL, and NLKM…YFLF. The ABC transmembrane type-1 domain occupies 99–302; that stretch reads IWINSLVTIL…LPMFIVYFLF (204 aa).

The protein belongs to the binding-protein-dependent transport system permease family. MalFG subfamily.

It localises to the cell membrane. In terms of biological role, probably part of a binding-protein-dependent transport system. Probably responsible for the translocation of the substrate across the membrane. The chain is Probable ABC transporter permease protein MG189 homolog from Mycoplasma pneumoniae (strain ATCC 29342 / M129 / Subtype 1) (Mycoplasmoides pneumoniae).